A 263-amino-acid chain; its full sequence is MTKNNESFTHRNFAAVLQKYKYDLNLGDIVAGTIFSFELNGVLVDIGTPVSAYLPIQEVSSNQELNNFNSLNINDTREFFLLDYNVESRQLILSIRRLEYIRAWKRIRQLLAEDSLLDVRIKGFNKGGMIVNLEGISGFVPNSHLNNFSKNTSSTNKFIKLKLLNVEEKSNNLILSHRRALIAQASSNLIVGNIIEGVINQITPYGLFIKAGNLKGLVHISEINVKQVERIPSQFKIGDTIKAVIIHVDKKQGRLSLSMKHLK.

S1 motif domains follow at residues 27 to 96 (GDIV…LSIR), 114 to 178 (DSLL…LSHR), and 192 to 260 (GNII…LSMK).

Belongs to the bacterial ribosomal protein bS1 family.

The protein resides in the plastid. The protein localises to the chloroplast. This is Small ribosomal subunit protein bS1c (rps1) from Porphyra purpurea (Red seaweed).